The chain runs to 529 residues: Bifunctional purine biosynthesis protein PurH (529 aa).

Residues 2–149 (TDLSPVRRAL…KNHAFVNVVV (148 aa)) form the MGS-like domain.

The protein belongs to the PurH family.

It carries out the reaction (6R)-10-formyltetrahydrofolate + 5-amino-1-(5-phospho-beta-D-ribosyl)imidazole-4-carboxamide = 5-formamido-1-(5-phospho-D-ribosyl)imidazole-4-carboxamide + (6S)-5,6,7,8-tetrahydrofolate. The enzyme catalyses IMP + H2O = 5-formamido-1-(5-phospho-D-ribosyl)imidazole-4-carboxamide. It participates in purine metabolism; IMP biosynthesis via de novo pathway; 5-formamido-1-(5-phospho-D-ribosyl)imidazole-4-carboxamide from 5-amino-1-(5-phospho-D-ribosyl)imidazole-4-carboxamide (10-formyl THF route): step 1/1. The protein operates within purine metabolism; IMP biosynthesis via de novo pathway; IMP from 5-formamido-1-(5-phospho-D-ribosyl)imidazole-4-carboxamide: step 1/1. This chain is Bifunctional purine biosynthesis protein PurH, found in Ruegeria pomeroyi (strain ATCC 700808 / DSM 15171 / DSS-3) (Silicibacter pomeroyi).